A 420-amino-acid polypeptide reads, in one-letter code: Exodeoxyribonuclease 7 large subunit (420 aa).

This sequence belongs to the XseA family. In terms of assembly, heterooligomer composed of large and small subunits.

It is found in the cytoplasm. The catalysed reaction is Exonucleolytic cleavage in either 5'- to 3'- or 3'- to 5'-direction to yield nucleoside 5'-phosphates.. In terms of biological role, bidirectionally degrades single-stranded DNA into large acid-insoluble oligonucleotides, which are then degraded further into small acid-soluble oligonucleotides. In Helicobacter pylori (strain G27), this protein is Exodeoxyribonuclease 7 large subunit.